The following is a 248-amino-acid chain: MKLKSGIVTGVALVLAYGLFLASYAPARLLTAVPLPAGMVVAEAAGTLWQGSLQRFSWRTLTLDDVHWNITFSDFMPALDIAFKNPEGIAGRGIIRGWQRAQFYQWQLSVPAGYLFSHMRFIVPIGAEGNVQLNLQEATVDRSGCQSLDANVTWPGARVKTPLGGLVLATPQATLRCQQGALEANLRQTSSHLQLSGKGSVTPKGEYRFTGQLSSGNDLPATMKKLLATTGKANEQGARTLNFQGRLL.

The Cytoplasmic segment spans residues 1 to 6 (MKLKSG). A helical; Signal-anchor for type II membrane protein transmembrane segment spans residues 7–27 (IVTGVALVLAYGLFLASYAPA). Over 28 to 248 (RLLTAVPLPA…RTLNFQGRLL (221 aa)) the chain is Periplasmic.

The protein belongs to the GSP N family.

It is found in the cell inner membrane. Functionally, involved in a type II secretion system (T2SS, formerly general secretion pathway, GSP) for the export of proteins. Required for the translocation of the multiple pectic enzymes. This chain is Type II secretion system protein N (outN), found in Pectobacterium carotovorum subsp. carotovorum (Erwinia carotovora subsp. carotovora).